A 339-amino-acid polypeptide reads, in one-letter code: Uridylate kinase PUMPKIN, chloroplastic (339 aa).

The transit peptide at 1-53 directs the protein to the chloroplast; it reads MAIPLPLTSCSPISTSSSISRTSFVPLTLRNRTFFSNQNYSRRVLISCSSSLS. Over residues 52–79 the composition is skewed to low complexity; it reads LSSDNGSSPDSMNGNGNGNGSSLNGQSS. A disordered region spans residues 52 to 89; the sequence is LSSDNGSSPDSMNGNGNGNGSSLNGQSSFPRLPSFDGT. 102 to 105 contacts ATP; the sequence is KVSG. Positions 110–115 are involved in allosteric activation by GTP; that stretch reads GDEEQN. Glycine 144 provides a ligand contact to UMP. Residues glycine 145 and arginine 149 each coordinate ATP. Residue aspartate 165 participates in UMP binding. ATP contacts are provided by residues 180 to 184 and 189 to 191; these read QATME and PTR. 226–233 lines the UMP pocket; it reads TGNPFFTT. Residues threonine 253, phenylalanine 259, and aspartate 262 each coordinate ATP.

The protein belongs to the UMP kinase family. In terms of assembly, homomultimer. Homohexamer. Forms RNA-containing megadalton-sized complexes. Expressed exclusively in leaves, but not in roots.

The protein localises to the plastid. The protein resides in the chloroplast stroma. It carries out the reaction UMP + ATP = UDP + ADP. The protein operates within pyrimidine metabolism; CTP biosynthesis via de novo pathway; UDP from UMP (UMPK route): step 1/1. In terms of biological role, catalyzes the reversible phosphorylation of UMP to UDP. Required for specific post-transcriptional processes of many plastid transcripts (e.g. PSI (PsaA, PsaF), PSII (D1, CP43, CP47), Cytochrome b(6)f (Cytb(6)), ATP synthase (AtpC), LHCs (LHCa3, LHCb2), and NDH (NdhH)), thus being essential for retaining photosynthetic activity in chloroplasts. Associates with group II introns of the plastid transcripts trnG-UCC, trnV-UAC, petB, petD and ndhA to stabilize corresponding precursor RNAs. The sequence is that of Uridylate kinase PUMPKIN, chloroplastic from Arabidopsis thaliana (Mouse-ear cress).